We begin with the raw amino-acid sequence, 1532 residues long: Multidrug resistance-associated protein 1 (1532 aa).

Over 1–33 (MALSSFCSSDGSDPLWDWNVTWHTSNPDFTKCF) the chain is Extracellular. N-linked (GlcNAc...) asparagine glycosylation occurs at asparagine 19. A helical transmembrane segment spans residues 34–54 (QNTVLTWVPCFYLWSCFPLYF). Residues 55 to 74 (LYLSRHDRGYIQMTHLNKAK) are Cytoplasmic-facing. Residues 75-95 (TALGFFLWIICWADLFYSFWE) traverse the membrane as a helical segment. At 96–100 (RSQGM) the chain is on the extracellular side. A helical transmembrane segment spans residues 101 to 121 (LLAPVLLVSPTLLGITMLLAT). The Cytoplasmic segment spans residues 122–133 (FLIQFERRKGVQ). The chain crosses the membrane as a helical span at residues 134-154 (SSGIMLTFWLVALLCALAILR). Topologically, residues 155 to 172 (SKIISALKKDAQVDMFRD) are extracellular. Residues 173-193 (SAFYLYFTLVFIQLVLSCFSD) traverse the membrane as a helical segment. Topologically, residues 194–317 (SSPLFSETVR…KDRDPSLFKV (124 aa)) are cytoplasmic. At tyrosine 277 the chain carries Phosphotyrosine. The residue at position 290 (serine 290) is a Phosphoserine. Residues 318-338 (LYKTFGPYFLMSFLYKALHDL) traverse the membrane as a helical segment. The 284-residue stretch at 326 to 609 (FLMSFLYKAL…LPMVISSIVQ (284 aa)) folds into the ABC transmembrane type-1 1 domain. Topologically, residues 339–364 (MMFAGPEILELIINFVNDREAPDWQG) are extracellular. The chain crosses the membrane as a helical span at residues 365–385 (YLYTALLFVSACLQTLALHQY). The Cytoplasmic portion of the chain corresponds to 386–441 (FHICFVTGMRIKTAVVGAVYRKALVITNSARKSSTVGEIVNLMSVDAQRFMDLATY). Residues 442–462 (INMIWSAPLQVTLALYFLWLN) traverse the membrane as a helical segment. Residues 463-465 (LGP) are Extracellular-facing. The helical transmembrane segment at 466–486 (SVLAGVAVMILMVPFNAVMAM) threads the bilayer. Residues 487–548 (KTKTYQVAHM…VLKKSAYLAA (62 aa)) are Cytoplasmic-facing. At lysine 504 the chain carries N6-succinyllysine. A helical transmembrane segment spans residues 549-569 (VGTFTWVCTPFLVALSTFAVF). The Extracellular segment spans residues 570 to 591 (VTVDEKNILDAKKAFVSLALFN). A helical transmembrane segment spans residues 592–612 (ILRFPLNILPMVISSIVQASV). The Cytoplasmic segment spans residues 613 to 967 (SLKRLRIFLS…VKLSVYWNYM (355 aa)). The ABC transporter 1 domain maps to 645-869 (ITVKNATFTW…DGAFAEFVRT (225 aa)). 679 to 686 (GQVGCGKS) serves as a coordination point for ATP. Phosphoserine occurs at positions 879, 883, 916, and 931. The helical transmembrane segment at 968 to 988 (KAIGLCISFLSIFLFLCNHVS) threads the bilayer. One can recognise an ABC transmembrane type-1 2 domain in the interval 975–1257 (SFLSIFLFLC…LVRMSSEMET (283 aa)). Residues 989-1026 (ALASNYWLSLWTDDRPAVNGTQENRNFRLSVYGALGIL) lie on the Extracellular side of the membrane. A helical membrane pass occupies residues 1027–1047 (QGVAVFGYSMAVSIGGIFASR). Residues 1048–1090 (RLHLDLLQNVLRSPMSFFERTPSGNLVNRFSKELDTVDSMIPQ) lie on the Cytoplasmic side of the membrane. Residues 1091 to 1111 (VIKMFMGSLFSVIGAVIIILL) form a helical membrane-spanning segment. Alanine 1112 is a topological domain (extracellular). Residues 1113–1133 (TPIAAVIIPPLGLVYFFVQRF) form a helical membrane-spanning segment. The Cytoplasmic portion of the chain corresponds to 1134–1204 (YVASSRQLKR…VANRWLAVRL (71 aa)). A helical membrane pass occupies residues 1205–1225 (ECVGNCIVLFAALFAVISRHS). Residues 1226–1227 (LS) are Extracellular-facing. Residues 1228–1248 (AGLVGLSVSYSLQITAYLNWL) traverse the membrane as a helical segment. The Cytoplasmic portion of the chain corresponds to 1249 to 1532 (VRMSSEMETN…YSMAKDAGLV (284 aa)). An ABC transporter 2 domain is found at 1294–1528 (VEFRDYCLRY…RGVFYSMAKD (235 aa)). Residue 1328 to 1335 (GRTGAGKS) coordinates ATP.

It belongs to the ABC transporter superfamily. ABCC family. Conjugate transporter (TC 3.A.1.208) subfamily. In terms of processing, glycosylated. Skeletal muscle, brain, heart, spleen, lung and kidney.

The protein resides in the cell membrane. The protein localises to the basolateral cell membrane. The catalysed reaction is ATP + H2O + xenobioticSide 1 = ADP + phosphate + xenobioticSide 2.. It catalyses the reaction an S-substituted glutathione(in) + ATP + H2O = an S-substituted glutathione(out) + ADP + phosphate + H(+). The enzyme catalyses sphing-4-enine 1-phosphate(in) + ATP + H2O = sphing-4-enine 1-phosphate(out) + ADP + phosphate + H(+). It carries out the reaction leukotriene C4(in) + ATP + H2O = leukotriene C4(out) + ADP + phosphate + H(+). The catalysed reaction is 17beta-estradiol 17-O-(beta-D-glucuronate)(in) + ATP + H2O = 17beta-estradiol 17-O-(beta-D-glucuronate)(out) + ADP + phosphate + H(+). It catalyses the reaction daunorubicin(in) + ATP + H2O = daunorubicin(out) + ADP + phosphate + H(+). The enzyme catalyses vincristine(in) + ATP + H2O = vincristine(out) + ADP + phosphate + H(+). It carries out the reaction 2',3'-cGAMP(in) + ATP + H2O = 2',3'-cGAMP(out) + ADP + phosphate + H(+). The catalysed reaction is S-[(2E,6E,10E)-geranylgeranyl]-L-glutathione(in) + ATP + H2O = S-[(2E,6E,10E)-geranylgeranyl]-L-glutathione(out) + ADP + phosphate + H(+). It catalyses the reaction prostaglandin A2-S-(R)-glutathione(in) + ATP + H2O = prostaglandin A2-S-(R)-glutathione(out) + ADP + phosphate + H(+). The enzyme catalyses prostaglandin A2-S-(S)-glutathione(in) + ATP + H2O = prostaglandin A2-S-(S)-glutathione(out) + ADP + phosphate + H(+). With respect to regulation, MK 571 inhibits sphingosine 1-phosphate and leukotriene C4 export. Functionally, mediates export of organic anions and drugs from the cytoplasm. Mediates ATP-dependent transport of glutathione and glutathione conjugates, leukotriene C4, estradiol-17-beta-o-glucuronide, methotrexate, antiviral drugs and other xenobiotics. Confers resistance to anticancer drugs by decreasing accumulation of drug in cells, and by mediating ATP- and GSH-dependent drug export. Hydrolyzes ATP with low efficiency. Catalyzes the export of sphingosine 1-phosphate from mast cells independently of their degranulation. Participates in inflammatory response by allowing export of leukotriene C4 from leukotriene C4-synthesizing cells. Exports S-geranylgeranyl-glutathione (GGG) in lymphoid cells and stromal compartments of lymphoid organs. ABCC1 (via extracellular transport) with GGT5 (via GGG catabolism) establish GGG gradients within lymphoid tissues to position P2RY8-positive lymphocytes at germinal centers in lymphoid follicles and restrict their chemotactic transmigration from blood vessels to the bone marrow parenchyma. Mediates basolateral export of GSH-conjugated R- and S-prostaglandin A2 diastereomers in polarized epithelial cells. The polypeptide is Multidrug resistance-associated protein 1 (Rattus norvegicus (Rat)).